Reading from the N-terminus, the 635-residue chain is Chaperone protein DnaK (635 aa).

T198 carries the phosphothreonine; by autocatalysis modification. A disordered region spans residues 598-635; sequence YAKAQPGEEQAGGAPHEGEAKDEKVVDADFEEVKEDKK. Residues 613–624 show a composition bias toward basic and acidic residues; it reads HEGEAKDEKVVD. Residues 625–635 show a composition bias toward acidic residues; the sequence is ADFEEVKEDKK.

The protein belongs to the heat shock protein 70 family.

Functionally, acts as a chaperone. This chain is Chaperone protein DnaK, found in Geotalea uraniireducens (strain Rf4) (Geobacter uraniireducens).